The primary structure comprises 82 residues: Large ribosomal subunit protein uL24c (82 aa).

Belongs to the universal ribosomal protein uL24 family. As to quaternary structure, part of the 50S ribosomal subunit.

Its subcellular location is the plastid. It is found in the chloroplast. One of two assembly initiator proteins, it binds directly to the 5'-end of the 23S rRNA, where it nucleates assembly of the 50S subunit. This chain is Large ribosomal subunit protein uL24c (rpl24), found in Phaeodactylum tricornutum (strain CCAP 1055/1).